The sequence spans 101 residues: Thrombin-like enzyme okinaxobin-1 (101 aa).

An N-terminal signal peptide occupies residues 1–16 (LIRVLANLLILQLSYA). A propeptide spanning residues 17–22 (QKSSEL) is cleaved from the precursor. The region spanning 23–101 (VIGGDECNIN…PKKKYFFRCR (79 aa)) is the Peptidase S1 domain. An intrachain disulfide couples Cys-50 to Cys-66. Residue His-65 is the Charge relay system of the active site.

It belongs to the peptidase S1 family. Snake venom subfamily. As to quaternary structure, monomer. Post-translationally, glycosylated. In terms of tissue distribution, expressed by the venom gland.

It is found in the secreted. Its activity is regulated as follows. Strongly inactivated by diisopropylfluorophosphate (DFP) and phenylmethanesulfonyl fluoride (PMSF), and to a lesser extent by tosyl-L-lysine chloromethyl ketone (TLCK). Thrombin-like snake venom serine protease that releases specifically fibrinopeptide B from fibrinogen (FGB) to form fibrin clots. Shows a preferential cleavage at Arg-|-Gly bonds in fibrinogen beta chains. Cleaves fibrinogen beta chains preferentially to alpha chains. The polypeptide is Thrombin-like enzyme okinaxobin-1 (Ovophis okinavensis (Ryukyu Island pit viper)).